Consider the following 356-residue polypeptide: Protein RecA (356 aa).

77–84 (GPESSGKT) is a binding site for ATP.

The protein belongs to the RecA family.

Its subcellular location is the cytoplasm. Functionally, can catalyze the hydrolysis of ATP in the presence of single-stranded DNA, the ATP-dependent uptake of single-stranded DNA by duplex DNA, and the ATP-dependent hybridization of homologous single-stranded DNAs. It interacts with LexA causing its activation and leading to its autocatalytic cleavage. In Caulobacter sp. (strain K31), this protein is Protein RecA.